Reading from the N-terminus, the 69-residue chain is Alternative ribosome-rescue factor A (69 aa).

The protein belongs to the alternative ribosome-rescue factor A family. Interacts with the 70S ribosome and release factor 2.

Its function is as follows. Rescues ribosomes stalled at the 3' end of non-stop mRNAs. Recruits release factor 2 (RF2) to the stalled ribosome, helping position it correctly in the ribosomal A site so its GGQ motif can hydrolyze the peptidyl-tRNA bond. The protein is Alternative ribosome-rescue factor A (arfA) of Haemophilus influenzae (strain ATCC 51907 / DSM 11121 / KW20 / Rd).